We begin with the raw amino-acid sequence, 223 residues long: Deoxyribose-phosphate aldolase 1 (223 aa).

Asp91 (proton donor/acceptor) is an active-site residue. Lys153 serves as the catalytic Schiff-base intermediate with acetaldehyde. Lys182 functions as the Proton donor/acceptor in the catalytic mechanism.

Belongs to the DeoC/FbaB aldolase family. DeoC type 1 subfamily.

It localises to the cytoplasm. The enzyme catalyses 2-deoxy-D-ribose 5-phosphate = D-glyceraldehyde 3-phosphate + acetaldehyde. The protein operates within carbohydrate degradation; 2-deoxy-D-ribose 1-phosphate degradation; D-glyceraldehyde 3-phosphate and acetaldehyde from 2-deoxy-alpha-D-ribose 1-phosphate: step 2/2. In terms of biological role, catalyzes a reversible aldol reaction between acetaldehyde and D-glyceraldehyde 3-phosphate to generate 2-deoxy-D-ribose 5-phosphate. The protein is Deoxyribose-phosphate aldolase 1 of Yersinia pestis.